The chain runs to 118 residues: D-dopachrome decarboxylase (118 aa).

Proline 2 carries the post-translational modification N-acetylproline. Residue lysine 33 is modified to N6-acetyllysine.

Belongs to the MIF family. Homotrimer. In terms of tissue distribution, highly expressed in the liver and at lower levels in the heart, lung and pancreas.

The protein localises to the cytoplasm. The catalysed reaction is D-dopachrome + H(+) = 5,6-dihydroxyindole + CO2. Tautomerization of D-dopachrome with decarboxylation to give 5,6-dihydroxyindole (DHI). The sequence is that of D-dopachrome decarboxylase (DDT) from Homo sapiens (Human).